Here is a 139-residue protein sequence, read N- to C-terminus: MLSPRRTKFRKQQRGRMRGLAERGSTLNFGDYALQATEPCWITSRQIEAARRAMTRYIRRGGKIWIRIFPDKPVTMRPAETRMGSGKGSPEYWVAVVKPGRVMFELAGVSEEVAREAMRLAAQKLPIKTKFISRQEDYI.

Belongs to the universal ribosomal protein uL16 family. In terms of assembly, part of the 50S ribosomal subunit.

Functionally, binds 23S rRNA and is also seen to make contacts with the A and possibly P site tRNAs. In Synechocystis sp. (strain ATCC 27184 / PCC 6803 / Kazusa), this protein is Large ribosomal subunit protein uL16.